We begin with the raw amino-acid sequence, 363 residues long: Large ribosomal subunit protein uL4A (363 aa).

Serine 87 carries the post-translational modification Phosphoserine. A C-terminal-extended nuclear localization signal region spans residues 280–363; sequence PENIISNADV…EKFLTVLHEN (84 aa).

This sequence belongs to the universal ribosomal protein uL4 family. Component of the large ribosomal subunit (LSU). Mature yeast ribosomes consist of a small (40S) and a large (60S) subunit. The 40S small subunit contains 1 molecule of ribosomal RNA (18S rRNA) and at least 33 different proteins. The large 60S subunit contains 3 rRNA molecules (25S, 5.8S and 5S rRNA) and at least 46 different proteins. uL4 is associated with the polypeptide exit tunnel. uL4 interacts with its chaperone ACL4 and the nuclear import receptor KAP104.

It localises to the cytoplasm. The protein localises to the nucleus. In terms of biological role, component of the ribosome, a large ribonucleoprotein complex responsible for the synthesis of proteins in the cell. The small ribosomal subunit (SSU) binds messenger RNAs (mRNAs) and translates the encoded message by selecting cognate aminoacyl-transfer RNA (tRNA) molecules. The large subunit (LSU) contains the ribosomal catalytic site termed the peptidyl transferase center (PTC), which catalyzes the formation of peptide bonds, thereby polymerizing the amino acids delivered by tRNAs into a polypeptide chain. The nascent polypeptides leave the ribosome through a tunnel in the LSU and interact with protein factors that function in enzymatic processing, targeting, and the membrane insertion of nascent chains at the exit of the ribosomal tunnel. uL4 participates in the regulation of the accumulation of its own mRNA. In Schizosaccharomyces pombe (strain 972 / ATCC 24843) (Fission yeast), this protein is Large ribosomal subunit protein uL4A (rpl402).